The following is a 78-amino-acid chain: Putative permease-like protein YdzE (78 aa).

The next 3 helical transmembrane spans lie at Tyr2–Leu22, Gly27–Gly47, and Gln49–Ile69. Residues Tyr2 to Lys70 enclose the EamA domain.

The protein belongs to the EamA transporter family.

Its subcellular location is the cell membrane. The chain is Putative permease-like protein YdzE (ydzE) from Bacillus subtilis (strain 168).